Consider the following 433-residue polypeptide: Glutamate-1-semialdehyde 2,1-aminomutase (433 aa).

At Lys-271 the chain carries N6-(pyridoxal phosphate)lysine.

Belongs to the class-III pyridoxal-phosphate-dependent aminotransferase family. HemL subfamily. Homodimer. Pyridoxal 5'-phosphate is required as a cofactor.

The protein localises to the cytoplasm. The catalysed reaction is (S)-4-amino-5-oxopentanoate = 5-aminolevulinate. It functions in the pathway porphyrin-containing compound metabolism; protoporphyrin-IX biosynthesis; 5-aminolevulinate from L-glutamyl-tRNA(Glu): step 2/2. Its pathway is porphyrin-containing compound metabolism; chlorophyll biosynthesis. In Prochlorococcus marinus (strain AS9601), this protein is Glutamate-1-semialdehyde 2,1-aminomutase.